Here is a 549-residue protein sequence, read N- to C-terminus: MQNINPTQTNAWKALEQHQKDLDQVTIQQLFEQEPTRFNDYSLKFAEQILVDYSKNNINQQTLSLLRQLAKECALNEATEAMFNGEKINRTENRAVLHTALRSCANTPVYVDGKDVMPEVNAVLAKMKSFCQRVISGDWKGYTGKAITDVVNIGIGGSDLGPYMVTEALRPYKNHLTMHFVSNVDGTHIAETLKKVNPETTLFLVASKTFTTQETMTNAISARKWFLAAAQDESQIANHFAALSTNAKEVEKFGIDTNNMFEFWDWVGGRYSLWSAIGLSIALSIGFDNFEQLLAGAHEMDNHFRTAPMEQNIPATLALIGIWNCNFLGAETEAMLPYDQYLHRFAAYFQQGNMESNGKYVARNGEVINNYQTGPIIWGEPGTNGQHAFYQLIHQGTKIIPCDFIAPAQTHNPLSDHHSKLLSNFFAQTEALAFGKTQQEVEAEFVKAGKSLDEVKEIVPFKVFTGNKPTNSILVQKITPFTLGALIAMYEHKIFVQGVIFNIYSFDQWGVELGKQLANRILPELTGDESISSHDSSTNGLINQFKAWR.

Glu355 acts as the Proton donor in catalysis. Catalysis depends on residues His387 and Lys515.

It belongs to the GPI family.

Its subcellular location is the cytoplasm. It carries out the reaction alpha-D-glucose 6-phosphate = beta-D-fructose 6-phosphate. Its pathway is carbohydrate biosynthesis; gluconeogenesis. It functions in the pathway carbohydrate degradation; glycolysis; D-glyceraldehyde 3-phosphate and glycerone phosphate from D-glucose: step 2/4. In terms of biological role, catalyzes the reversible isomerization of glucose-6-phosphate to fructose-6-phosphate. In Histophilus somni (strain 129Pt) (Haemophilus somnus), this protein is Glucose-6-phosphate isomerase.